We begin with the raw amino-acid sequence, 161 residues long: Cell division protein SepF 2 (161 aa).

The tract at residues E19–S47 is disordered. A compositionally biased stretch (basic and acidic residues) spans S21–T35.

This sequence belongs to the SepF family. As to quaternary structure, homodimer. Interacts with FtsZ.

It is found in the cytoplasm. Cell division protein that is part of the divisome complex and is recruited early to the Z-ring. Probably stimulates Z-ring formation, perhaps through the cross-linking of FtsZ protofilaments. Its function overlaps with FtsA. This chain is Cell division protein SepF 2, found in Desulforamulus reducens (strain ATCC BAA-1160 / DSM 100696 / MI-1) (Desulfotomaculum reducens).